We begin with the raw amino-acid sequence, 151 residues long: UPF0735 ACT domain-containing protein SH1278 (151 aa).

An ACT domain is found at 74-149 (TLILYVNDIV…HVSKVELISM (76 aa)).

The protein belongs to the UPF0735 family.

This chain is UPF0735 ACT domain-containing protein SH1278, found in Staphylococcus haemolyticus (strain JCSC1435).